The chain runs to 96 residues: RNA-binding protein Hfq (96 aa).

The region spanning 9–68 (DPFLNALRRERVPVSIYLVNGIKLQGQIESFDQFVILLKNTVSQMVYKHAISTVVPSRPV) is the Sm domain. The tract at residues 64–96 (PSRPVSHHSNTGTNQAGTNYSGGNATQQDDVAE) is disordered. Positions 70-96 (HHSNTGTNQAGTNYSGGNATQQDDVAE) are enriched in polar residues.

Belongs to the Hfq family. Homohexamer.

In terms of biological role, RNA chaperone that binds small regulatory RNA (sRNAs) and mRNAs to facilitate mRNA translational regulation in response to envelope stress, environmental stress and changes in metabolite concentrations. Also binds with high specificity to tRNAs. This Proteus mirabilis (strain HI4320) protein is RNA-binding protein Hfq.